The following is a 106-amino-acid chain: Large ribosomal subunit protein uL24 (106 aa).

It belongs to the universal ribosomal protein uL24 family. In terms of assembly, part of the 50S ribosomal subunit.

Functionally, one of two assembly initiator proteins, it binds directly to the 5'-end of the 23S rRNA, where it nucleates assembly of the 50S subunit. In terms of biological role, one of the proteins that surrounds the polypeptide exit tunnel on the outside of the subunit. The polypeptide is Large ribosomal subunit protein uL24 (Porphyromonas gingivalis (strain ATCC 33277 / DSM 20709 / CIP 103683 / JCM 12257 / NCTC 11834 / 2561)).